Reading from the N-terminus, the 483-residue chain is Cysteine proteinase 1, mitochondrial (483 aa).

The N-terminal 30 residues, 1–30, are a transit peptide targeting the mitochondrion; that stretch reads MLPTSVSRSLYLKTFRSHLLRAPQIVLKRM. Residues Cys102, His398, and Asn421 contribute to the active site. Lys483 is a propeptide (removed in mature form; by autocatalysis).

Belongs to the peptidase C1 family. Homohexamer. Binds to nucleic acids. Binds single-stranded DNA and RNA with higher affinity than double-stranded DNA. Post-translationally, the N-terminus of isoform Cytoplasmic is blocked.

It localises to the mitochondrion. Its subcellular location is the cytoplasm. The catalysed reaction is Inactivates bleomycin B2 (a cytotoxic glycometallopeptide) by hydrolysis of a carboxyamide bond of beta-aminoalanine, but also shows general aminopeptidase activity. The specificity varies somewhat with source, but amino acid arylamides of Met, Leu and Ala are preferred.. Its activity is regulated as follows. Inhibited by E64, a specific inhibitor of cysteine proteases, N-ethylmaleimide, iodacetamide, and mercury and zinc ions. Functionally, the normal physiological role of the enzyme is unknown, but it is not essential for the viability of yeast cells. Has aminopeptidase activity, shortening substrate peptides sequentially by 1 amino acid. Has bleomycin hydrolase activity, which can protect the cell from the toxic effects of bleomycin. Has homocysteine-thiolactonase activity, protecting the cell against homocysteine toxicity. Acts as a repressor in the GAL4 regulatory system, but this does not require either the peptidase or nucleic acid-binding activities. This chain is Cysteine proteinase 1, mitochondrial (LAP3), found in Saccharomyces cerevisiae (strain JAY291) (Baker's yeast).